The sequence spans 151 residues: UPF0178 protein Hhal_1913 (151 aa).

The protein belongs to the UPF0178 family.

This chain is UPF0178 protein Hhal_1913, found in Halorhodospira halophila (strain DSM 244 / SL1) (Ectothiorhodospira halophila (strain DSM 244 / SL1)).